Here is a 197-residue protein sequence, read N- to C-terminus: Probable chorismate pyruvate-lyase (197 aa).

Residues 1-14 are compositionally biased toward basic and acidic residues; it reads MRFDAADAHWRETP. Positions 1–25 are disordered; the sequence is MRFDAADAHWRETPRPGASGAQKDW. Residues Arg73, Leu111, and Glu173 each coordinate substrate.

Belongs to the UbiC family.

Its subcellular location is the cytoplasm. It catalyses the reaction chorismate = 4-hydroxybenzoate + pyruvate. Its pathway is cofactor biosynthesis; ubiquinone biosynthesis. Functionally, removes the pyruvyl group from chorismate, with concomitant aromatization of the ring, to provide 4-hydroxybenzoate (4HB) for the ubiquinone pathway. The sequence is that of Probable chorismate pyruvate-lyase from Burkholderia thailandensis (strain ATCC 700388 / DSM 13276 / CCUG 48851 / CIP 106301 / E264).